Consider the following 475-residue polypeptide: Ribulose bisphosphate carboxylase large chain (475 aa).

The propeptide occupies 1-2; sequence MS. Proline 3 carries the N-acetylproline modification. Residue lysine 14 is modified to N6,N6,N6-trimethyllysine. Residues asparagine 123 and threonine 173 each contribute to the substrate site. Lysine 175 acts as the Proton acceptor in catalysis. Residue lysine 177 participates in substrate binding. Positions 201, 203, and 204 each coordinate Mg(2+). Lysine 201 is modified (N6-carboxylysine). The Proton acceptor role is filled by histidine 294. Substrate-binding residues include arginine 295, histidine 327, and serine 379.

This sequence belongs to the RuBisCO large chain family. Type I subfamily. In terms of assembly, heterohexadecamer of 8 large chains and 8 small chains; disulfide-linked. The disulfide link is formed within the large subunit homodimers. It depends on Mg(2+) as a cofactor. The disulfide bond which can form in the large chain dimeric partners within the hexadecamer appears to be associated with oxidative stress and protein turnover.

It localises to the plastid. Its subcellular location is the chloroplast. The enzyme catalyses 2 (2R)-3-phosphoglycerate + 2 H(+) = D-ribulose 1,5-bisphosphate + CO2 + H2O. The catalysed reaction is D-ribulose 1,5-bisphosphate + O2 = 2-phosphoglycolate + (2R)-3-phosphoglycerate + 2 H(+). In terms of biological role, ruBisCO catalyzes two reactions: the carboxylation of D-ribulose 1,5-bisphosphate, the primary event in carbon dioxide fixation, as well as the oxidative fragmentation of the pentose substrate in the photorespiration process. Both reactions occur simultaneously and in competition at the same active site. The polypeptide is Ribulose bisphosphate carboxylase large chain (Clarkia xantiana (Gunsight clarkia)).